Here is a 20-residue protein sequence, read N- to C-terminus: T cell receptor alpha joining 3 (20 aa).

Alpha-beta TR is a heterodimer composed of an alpha and beta chain; disulfide-linked. The alpha-beta TR is associated with the transmembrane signaling CD3 coreceptor proteins to form the TR-CD3 (TcR or TCR). The assembly of alpha-beta TR heterodimers with CD3 occurs in the endoplasmic reticulum where a single alpha-beta TR heterodimer associates with one CD3D-CD3E heterodimer, one CD3G-CD3E heterodimer and one CD247 homodimer forming a stable octameric structure. CD3D-CD3E and CD3G-CD3E heterodimers preferentially associate with TR alpha and TR beta chains, respectively. The association of the CD247 homodimer is the last step of TcR assembly in the endoplasmic reticulum and is required for transport to the cell surface.

It localises to the cell membrane. In terms of biological role, j region of the variable domain of T cell receptor (TR) alpha chain that participates in the antigen recognition. Alpha-beta T cell receptors are antigen specific receptors which are essential to the immune response and are present on the cell surface of T lymphocytes. Recognize peptide-major histocompatibility (MH) (pMH) complexes that are displayed by antigen presenting cells (APC), a prerequisite for efficient T cell adaptive immunity against pathogens. Binding of alpha-beta TR to pMH complex initiates TR-CD3 clustering on the cell surface and intracellular activation of LCK that phosphorylates the ITAM motifs of CD3G, CD3D, CD3E and CD247 enabling the recruitment of ZAP70. In turn ZAP70 phosphorylates LAT, which recruits numerous signaling molecules to form the LAT signalosome. The LAT signalosome propagates signal branching to three major signaling pathways, the calcium, the mitogen-activated protein kinase (MAPK) kinase and the nuclear factor NF-kappa-B (NF-kB) pathways, leading to the mobilization of transcription factors that are critical for gene expression and essential for T cell growth and differentiation. The T cell repertoire is generated in the thymus, by V-(D)-J rearrangement. This repertoire is then shaped by intrathymic selection events to generate a peripheral T cell pool of self-MH restricted, non-autoaggressive T cells. Post-thymic interaction of alpha-beta TR with the pMH complexes shapes TR structural and functional avidity. The sequence is that of T cell receptor alpha joining 3 from Homo sapiens (Human).